The sequence spans 158 residues: Snaclec mucrocetin subunit alpha (158 aa).

The signal sequence occupies residues 1 to 23 (MGRFIFVSFGLLVVFLSLSGTGA). 3 disulfides stabilise this stretch: Cys-27/Cys-38, Cys-55/Cys-152, and Cys-127/Cys-144. Positions 34–153 (YDRYCYQAFS…CGRENPFVCK (120 aa)) constitute a C-type lectin domain.

The protein belongs to the snaclec family. In terms of assembly, tetramer of heterodimers of alpha and beta subunits (alphabeta)(4); disulfide-linked. Expressed by the venom gland.

It localises to the secreted. Its function is as follows. Platelet-agglutinating factor that acts in a vWF-independent manner. Binds specifically to platelet GPIbalpha (GP1BA) to a distinct binding site from that of flavocetin-A. The polypeptide is Snaclec mucrocetin subunit alpha (Protobothrops mucrosquamatus (Taiwan habu)).